We begin with the raw amino-acid sequence, 230 residues long: Ion-translocating oxidoreductase complex subunit E (230 aa).

A run of 6 helical transmembrane segments spans residues Gly11 to Val31, Leu39 to Val59, Ile69 to Ala89, Gly93 to Gly113, Phe132 to Ile152, and Ser182 to Leu202.

This sequence belongs to the NqrDE/RnfAE family. As to quaternary structure, the complex is composed of six subunits: RnfA, RnfB, RnfC, RnfD, RnfE and RnfG.

It localises to the cell inner membrane. Its function is as follows. Part of a membrane-bound complex that couples electron transfer with translocation of ions across the membrane. The polypeptide is Ion-translocating oxidoreductase complex subunit E (Vibrio atlanticus (strain LGP32) (Vibrio splendidus (strain Mel32))).